The chain runs to 360 residues: Ferredoxin--NADP reductase (360 aa).

Positions 25, 44, 52, 57, 97, 132, 298, and 339 each coordinate FAD.

It belongs to the ferredoxin--NADP reductase type 2 family. In terms of assembly, homodimer. FAD serves as cofactor.

It carries out the reaction 2 reduced [2Fe-2S]-[ferredoxin] + NADP(+) + H(+) = 2 oxidized [2Fe-2S]-[ferredoxin] + NADPH. The chain is Ferredoxin--NADP reductase from Chlorobaculum tepidum (strain ATCC 49652 / DSM 12025 / NBRC 103806 / TLS) (Chlorobium tepidum).